Reading from the N-terminus, the 235-residue chain is Regulator of G-protein signaling 18 (235 aa).

Serine 49 is modified (phosphoserine). Residues 86–202 enclose the RGS domain; it reads SFDKLLSHRD…LKSDIYLDLM (117 aa). 2 positions are modified to phosphoserine: serine 216 and serine 218.

Expressed in peripheral leukocytes, bone marrow, platelet, spleen and fetal liver.

The protein localises to the cytoplasm. In terms of biological role, inhibits signal transduction by increasing the GTPase activity of G protein alpha subunits thereby driving them into their inactive GDP-bound form. Binds to G(i) alpha-1, G(i) alpha-2, G(i) alpha-3 and G(q) alpha. The chain is Regulator of G-protein signaling 18 (RGS18) from Homo sapiens (Human).